Reading from the N-terminus, the 119-residue chain is Large ribosomal subunit protein uL18 (119 aa).

It belongs to the universal ribosomal protein uL18 family. In terms of assembly, part of the 50S ribosomal subunit; part of the 5S rRNA/L5/L18/L25 subcomplex. Contacts the 5S and 23S rRNAs.

Its function is as follows. This is one of the proteins that bind and probably mediate the attachment of the 5S RNA into the large ribosomal subunit, where it forms part of the central protuberance. This Clostridium botulinum (strain Loch Maree / Type A3) protein is Large ribosomal subunit protein uL18.